The sequence spans 295 residues: Elongation factor Ts (295 aa).

The involved in Mg(2+) ion dislocation from EF-Tu stretch occupies residues 79 to 82; sequence TDFV.

It belongs to the EF-Ts family.

It localises to the cytoplasm. Associates with the EF-Tu.GDP complex and induces the exchange of GDP to GTP. It remains bound to the aminoacyl-tRNA.EF-Tu.GTP complex up to the GTP hydrolysis stage on the ribosome. This chain is Elongation factor Ts, found in Mycoplasma mycoides subsp. mycoides SC (strain CCUG 32753 / NCTC 10114 / PG1).